The sequence spans 836 residues: Pentatricopeptide repeat-containing protein At1g79490, mitochondrial (836 aa).

A mitochondrion-targeting transit peptide spans 1 to 85 (MIRGRTAKVI…QCRSIVRRFC (85 aa)). PPR repeat units lie at residues 204-238 (SDECYVVLFDGLNQGRDFVGIQSLFEEMVQDSSSH), 242-276 (SFNAYNQVIQYLAKAEKLEVAFCCFKKAQESGCKI), 277-311 (DTQTYNNLMMLFLNKGLPYKAFEIYESMEKTDSLL), 312-346 (DGSTYELIIPSLAKSGRLDAAFKLFQQMKERKLRP), 347-381 (SFSVFSSLVDSMGKAGRLDTSMKVYMEMQGFGHRP), 382-416 (SATMFVSLIDSYAKAGKLDTALRLWDEMKKSGFRP), 417-451 (NFGLYTMIIESHAKSGKLEVAMTVFKDMEKAGFLP), 452-486 (TPSTYSCLLEMHAGSGQVDSAMKIYNSMTNAGLRP), 487-521 (GLSSYISLLTLLANKRLVDVAGKILLEMKAMGYSV), 528-555 (VLMIYIKDASVDLALKWLRFMGSSGIKT), 556-590 (NNFIIRQLFESCMKNGLYDSARPLLETLVHSAGKV), and 591-625 (DLVLYTSILAHLVRCQDEDKERQLMSILSATKHKA). The Smr domain occupies 710–786 (LDVRNLSVGA…APGELVMEWF (77 aa)).

Belongs to the PPR family. P subfamily.

The protein resides in the mitochondrion. This Arabidopsis thaliana (Mouse-ear cress) protein is Pentatricopeptide repeat-containing protein At1g79490, mitochondrial (EMB2217).